Consider the following 388-residue polypeptide: Phosphopentomutase (388 aa).

Mn(2+) contacts are provided by Asp-10, Asp-282, His-287, Asp-323, His-324, and His-335.

This sequence belongs to the phosphopentomutase family. Mn(2+) serves as cofactor.

Its subcellular location is the cytoplasm. It carries out the reaction 2-deoxy-alpha-D-ribose 1-phosphate = 2-deoxy-D-ribose 5-phosphate. The catalysed reaction is alpha-D-ribose 1-phosphate = D-ribose 5-phosphate. It participates in carbohydrate degradation; 2-deoxy-D-ribose 1-phosphate degradation; D-glyceraldehyde 3-phosphate and acetaldehyde from 2-deoxy-alpha-D-ribose 1-phosphate: step 1/2. Its function is as follows. Isomerase that catalyzes the conversion of deoxy-ribose 1-phosphate (dRib-1-P) and ribose 1-phosphate (Rib-1-P) to deoxy-ribose 5-phosphate (dRib-5-P) and ribose 5-phosphate (Rib-5-P), respectively. The chain is Phosphopentomutase from Acetivibrio thermocellus (strain ATCC 27405 / DSM 1237 / JCM 9322 / NBRC 103400 / NCIMB 10682 / NRRL B-4536 / VPI 7372) (Clostridium thermocellum).